The following is a 158-amino-acid chain: NAD(P)H-quinone oxidoreductase subunit J, chloroplastic (158 aa).

The protein belongs to the complex I 30 kDa subunit family. As to quaternary structure, NDH is composed of at least 16 different subunits, 5 of which are encoded in the nucleus.

The protein resides in the plastid. The protein localises to the chloroplast thylakoid membrane. The catalysed reaction is a plastoquinone + NADH + (n+1) H(+)(in) = a plastoquinol + NAD(+) + n H(+)(out). The enzyme catalyses a plastoquinone + NADPH + (n+1) H(+)(in) = a plastoquinol + NADP(+) + n H(+)(out). Its function is as follows. NDH shuttles electrons from NAD(P)H:plastoquinone, via FMN and iron-sulfur (Fe-S) centers, to quinones in the photosynthetic chain and possibly in a chloroplast respiratory chain. The immediate electron acceptor for the enzyme in this species is believed to be plastoquinone. Couples the redox reaction to proton translocation, and thus conserves the redox energy in a proton gradient. The polypeptide is NAD(P)H-quinone oxidoreductase subunit J, chloroplastic (Helianthus annuus (Common sunflower)).